A 137-amino-acid chain; its full sequence is Putative pre-16S rRNA nuclease (137 aa).

It belongs to the YqgF nuclease family.

It localises to the cytoplasm. In terms of biological role, could be a nuclease involved in processing of the 5'-end of pre-16S rRNA. In Mycoplasmopsis synoviae (strain 53) (Mycoplasma synoviae), this protein is Putative pre-16S rRNA nuclease.